The following is a 748-amino-acid chain: MEENNDSTENPQQGQGRQNAIKCGWLRKQGGFVKTWHTRWFVLKGDQLYYFKDEDETKPLGTIFLPGNKVSEHPCNEENPGKFLFEVVPGGDRDRMTANHESYLLMASTQNDMEDWVKSIRRVIWGPFGGGIFGQKLEDTVRYEKRYGNRLAPMLVEQCVDFIRQRGLKEEGLFRLPGQANLVKELQDAFDCGEKPSFDSNTDVHTVASLLKLYLRELPEPVIPYAKYEDFLSCAKLLSKEEEAGVKELAKQVKSLPVVNYNLLKYICRFLDEVQSYSGVNKMSVQNLATVFGPNILRPKVEDPLTIMEGTVVVQQLMSVMISKHDCLFPKDAELQSKPQDGVSNNNEIQKKATMGQLQNKENNNTKDSPSRQCSWDKSESPQRSSMNNGSPTALSGSKTNSPKNSVHKLDVSRSPPLMVKKNPAFNKGSGIVTNGSFSSSNAEGLEKTQTTPNGSLQARRSSSLKVSGTKMGTHSVQNGTVRMGILNSDTLGNPTNVRNMSWLPNGYVTLRDNKQKEQAGELGQHNRLSTYDNVHQQFSMMNLDDKQSIDSATWSTSSCEISLPENSNSCRSSTTTCPEQDFFGGNFEDPVLDGPPQDDLSHPRDYESKSDHRSVGGRSSRATSSSDNSETFVGNSSSNHSALHSLVSSLKQEMTKQKIEYESRIKSLEQRNLTLETEMMSLHDELDQERKKFTMIEIKMRNAERAKEDAEKRNDMLQKEMEQFFSTFGELTVEPRRTERGNTIWIQ.

Residues 1–20 (MEENNDSTENPQQGQGRQNA) form a disordered region. Polar residues predominate over residues 7–18 (STENPQQGQGRQ). In terms of domain architecture, PH spans 19-125 (NAIKCGWLRK…WVKSIRRVIW (107 aa)). Residues 135-329 (QKLEDTVRYE…VMISKHDCLF (195 aa)) enclose the Rho-GAP domain. Disordered stretches follow at residues 354-476 (TMGQ…GTHS) and 582-641 (DFFG…SSNH). Polar residues-rich tracts occupy residues 356 to 374 (GQLQ…SRQC) and 382 to 405 (PQRS…SPKN). Phosphoserine is present on residues S369, S391, S396, S398, S402, S413, S415, and S437. A compositionally biased stretch (polar residues) spans 432-476 (IVTNGSFSSSNAEGLEKTQTTPNGSLQARRSSSLKVSGTKMGTHS). Phosphothreonine is present on T452. The segment covering 600–615 (DLSHPRDYESKSDHRS) has biased composition (basic and acidic residues). A compositionally biased stretch (low complexity) spans 617-641 (GGRSSRATSSSDNSETFVGNSSSNH). A coiled-coil region spans residues 649 to 729 (SSLKQEMTKQ…KEMEQFFSTF (81 aa)).

Interacts with FLNA. In terms of processing, phosphorylated by ROCK, leading to activate the RacGAP activity. As to expression, isoform 1 is widely expressed with a higher level in kidney. Isoform 2 is mainly expressed in endothelial cells.

It is found in the cytoplasm. The protein localises to the cytoskeleton. Its subcellular location is the cell junction. It localises to the adherens junction. The protein resides in the focal adhesion. It is found in the cell projection. Its function is as follows. Rho GTPase-activating protein involved in cell polarity, cell morphology and cytoskeletal organization. Acts as a GTPase activator for the Rac-type GTPase by converting it to an inactive GDP-bound state. Controls actin remodeling by inactivating Rac downstream of Rho leading to suppress leading edge protrusion and promotes cell retraction to achieve cellular polarity. Able to suppress RAC1 and CDC42 activity in vitro. Overexpression induces cell rounding with partial or complete disruption of actin stress fibers and formation of membrane ruffles, lamellipodia, and filopodia. Isoform 2 is a vascular cell-specific GAP involved in modulation of angiogenesis. This is Rho GTPase-activating protein 24 (ARHGAP24) from Homo sapiens (Human).